A 246-amino-acid polypeptide reads, in one-letter code: Probable 2-phosphosulfolactate phosphatase (246 aa).

Belongs to the ComB family. Mg(2+) is required as a cofactor.

It catalyses the reaction (2R)-O-phospho-3-sulfolactate + H2O = (2R)-3-sulfolactate + phosphate. This Nostoc punctiforme (strain ATCC 29133 / PCC 73102) protein is Probable 2-phosphosulfolactate phosphatase.